The primary structure comprises 2512 residues: Isonitrile lipopeptide synthase (2512 aa).

Carrier domains follow at residues alanine 935–aspartate 1003 and alanine 1984–alanine 2059. Serine 963 and serine 2019 each carry O-(pantetheine 4'-phosphoryl)serine. Positions leucine 2112–isoleucine 2372 constitute a Thioester reductase (TE) domain.

It belongs to the ATP-dependent AMP-binding enzyme family. Pantetheine 4'-phosphate serves as cofactor.

The catalysed reaction is 2 a (3R)-3-isocyanyl-fatty acyl-[ACP] + L-lysine + ATP + 2 NADPH = an isonitrile lipopeptide + 2 holo-[ACP] + AMP + diphosphate + 2 NADP(+). In terms of biological role, nonribosomal peptide synthetase (NRPS) involved in the biosynthesis of a unique class of isonitrile lipopeptides (INLPs) that seem to function as virulence factors in M.tuberculosis and to play a role in metal acquisition. Catalyzes the final step in the pathway, i.e. the condensation of a (3R)-3-isocyanyl-fatty acyl-[ACP] to both amino groups of a lysine, producing isonitrile lipopeptides. This Mycobacterium tuberculosis (strain ATCC 25618 / H37Rv) protein is Isonitrile lipopeptide synthase.